Consider the following 204-residue polypeptide: Pyridoxamine 5'-phosphate oxidase YLR456W homolog (204 aa).

Residues 65–66 and Asn-127 contribute to the FMN site; that span reads FT.

The protein belongs to the pyridoxamine 5'-phosphate oxidase family. FMN serves as cofactor.

It is found in the cytoplasm. The protein resides in the nucleus. The protein is Pyridoxamine 5'-phosphate oxidase YLR456W homolog of Saccharomyces cerevisiae (strain ATCC 204508 / S288c) (Baker's yeast).